We begin with the raw amino-acid sequence, 480 residues long: UDP-N-acetylmuramoyl-L-alanyl-D-glutamate--2,6-diaminopimelate ligase (480 aa).

A UDP-N-acetyl-alpha-D-muramoyl-L-alanyl-D-glutamate-binding site is contributed by Ser21. 98–104 (GTNGKSS) contacts ATP. UDP-N-acetyl-alpha-D-muramoyl-L-alanyl-D-glutamate-binding positions include 144-145 (TT), Ser171, Gln177, and Arg179. An N6-carboxylysine modification is found at Lys211. Residues Arg372, 396–399 (DNPR), Gly446, and Glu450 contribute to the meso-2,6-diaminopimelate site. The short motif at 396–399 (DNPR) is the Meso-diaminopimelate recognition motif element.

The protein belongs to the MurCDEF family. MurE subfamily. The cofactor is Mg(2+). Carboxylation is probably crucial for Mg(2+) binding and, consequently, for the gamma-phosphate positioning of ATP.

It localises to the cytoplasm. It carries out the reaction UDP-N-acetyl-alpha-D-muramoyl-L-alanyl-D-glutamate + meso-2,6-diaminopimelate + ATP = UDP-N-acetyl-alpha-D-muramoyl-L-alanyl-gamma-D-glutamyl-meso-2,6-diaminopimelate + ADP + phosphate + H(+). It functions in the pathway cell wall biogenesis; peptidoglycan biosynthesis. Functionally, catalyzes the addition of meso-diaminopimelic acid to the nucleotide precursor UDP-N-acetylmuramoyl-L-alanyl-D-glutamate (UMAG) in the biosynthesis of bacterial cell-wall peptidoglycan. The protein is UDP-N-acetylmuramoyl-L-alanyl-D-glutamate--2,6-diaminopimelate ligase of Rickettsia prowazekii (strain Madrid E).